The primary structure comprises 267 residues: Alpha carbonic anhydrase 4 (267 aa).

The first 26 residues, M1–A26, serve as a signal peptide directing secretion. N-linked (GlcNAc...) asparagine glycosylation occurs at N22. An Alpha-carbonic anhydrase domain is found at T34–D264. The cysteines at positions 59 and 214 are disulfide-linked. H99 (proton acceptor) is an active-site residue. The Zn(2+) site is built by H125 and H127. Residue N135 is glycosylated (N-linked (GlcNAc...) asparagine). H144 serves as a coordination point for Zn(2+). T210 to V211 provides a ligand contact to substrate.

It belongs to the alpha-class carbonic anhydrase family. Requires Zn(2+) as cofactor. N-glycosylated.

It localises to the plastid. The protein resides in the chloroplast stroma. The enzyme catalyses hydrogencarbonate + H(+) = CO2 + H2O. Functionally, reversible hydration of carbon dioxide. In Arabidopsis thaliana (Mouse-ear cress), this protein is Alpha carbonic anhydrase 4 (ACA4).